The following is a 149-amino-acid chain: Large ribosomal subunit protein bL9 (149 aa).

This sequence belongs to the bacterial ribosomal protein bL9 family.

Binds to the 23S rRNA. The protein is Large ribosomal subunit protein bL9 of Histophilus somni (strain 129Pt) (Haemophilus somnus).